Reading from the N-terminus, the 637-residue chain is Protein kinase domain-containing protein ppk3 (637 aa).

A Protein kinase domain is found at 1–296 (MDFIKSAASF…QLLSSKLEVI (296 aa)). An HEAT repeat occupies 414-450 (KTLNNELLRSLAVVQNDQHPTLRTNSTICLGKIAEYL). The span at 576 to 586 (NDTTEIKEKKN) shows a compositional bias: basic and acidic residues. The tract at residues 576–637 (NDTTEIKEKK…ENNVEESWGL (62 aa)) is disordered. Acidic residues predominate over residues 608 to 631 (ETEEQIDESWMENWNDEEETENNV).

It localises to the golgi apparatus. This is Protein kinase domain-containing protein ppk3 (ppk3) from Schizosaccharomyces pombe (strain 972 / ATCC 24843) (Fission yeast).